Reading from the N-terminus, the 181-residue chain is Oligoribonuclease (181 aa).

The region spanning 8–171 is the Exonuclease domain; it reads LIWLDMEMTG…ADILESIEEM (164 aa). Residue Tyr-129 is part of the active site.

This sequence belongs to the oligoribonuclease family.

It localises to the cytoplasm. In terms of biological role, 3'-to-5' exoribonuclease specific for small oligoribonucleotides. The sequence is that of Oligoribonuclease from Chromobacterium violaceum (strain ATCC 12472 / DSM 30191 / JCM 1249 / CCUG 213 / NBRC 12614 / NCIMB 9131 / NCTC 9757 / MK).